A 137-amino-acid chain; its full sequence is MNFVLSDVADAEAEKAIRDPLVAYNLARFGESDKRDLNITIRNDDNSVTGGLVGHTARGWLYVQLLFVPEAMRGQGIAPKLLAMAEEEARKRGCMGAYIDTMNPDALRTYERYGFTKIGSLGPLSSGQSITWLEKRF.

Residues 1–137 (MNFVLSDVAD…QSITWLEKRF (137 aa)) form the N-acetyltransferase domain. CoA-binding positions include 66–68 (LFV), Gly74, and 108–110 (RTY).

Catalyzes the transfer of an acetyl group from acetyl coenzyme A (AcCoA) to an acceptor substrate and releases both CoA and the acetylated product. It prefers glucosamine 6-phosphate or dopamine. It can also use the thialysine, N(8)-acetylspermidine, chloramphenicol, puromycin, polymyxin B, and 4-aminobutyrate ethyl ester. The sequence is that of Acetyltransferase Atu2258 from Agrobacterium fabrum (strain C58 / ATCC 33970) (Agrobacterium tumefaciens (strain C58)).